The primary structure comprises 172 residues: Signal peptidase complex catalytic subunit sec11 (172 aa).

At 1–14 (MLSFLQNPRQAAAQ) the chain is on the cytoplasmic side. Residues 15–35 (VLNFALILSTAFMMWKGLSVA) traverse the membrane as a helical; Signal-anchor for type II membrane protein segment. The Lumenal segment spans residues 36–172 (SDSPSPIVVV…MGLVVVLQRE (137 aa)). Catalysis depends on charge relay system residues Ser49, His90, and Asp115. A C-terminal short (CTS) helix region spans residues 158-169 (VMLGMMGLVVVL).

This sequence belongs to the peptidase S26B family. As to quaternary structure, component of the signal peptidase complex (SPC) composed of a catalytic subunit SEC11 and three accessory subunits SPC1, SPC2 and SPC3. The complex induces a local thinning of the ER membrane which is used to measure the length of the signal peptide (SP) h-region of protein substrates. This ensures the selectivity of the complex towards h-regions shorter than 18-20 amino acids. SPC associates with the translocon complex.

Its subcellular location is the endoplasmic reticulum membrane. The enzyme catalyses Cleavage of hydrophobic, N-terminal signal or leader sequences from secreted and periplasmic proteins.. In terms of biological role, catalytic component of the signal peptidase complex (SPC) which catalyzes the cleavage of N-terminal signal sequences from nascent proteins as they are translocated into the lumen of the endoplasmic reticulum. Specifically cleaves N-terminal signal peptides that contain a hydrophobic alpha-helix (h-region) shorter than 18-20 amino acids. This Sclerotinia sclerotiorum (strain ATCC 18683 / 1980 / Ss-1) (White mold) protein is Signal peptidase complex catalytic subunit sec11 (sec11).